We begin with the raw amino-acid sequence, 173 residues long: Thaumatin-like protein PWIR2 (173 aa).

Positions 1–20 are cleaved as a signal peptide; it reads MATSPVLFLLLAVFAAGASA.

The protein belongs to the thaumatin family.

This chain is Thaumatin-like protein PWIR2, found in Triticum aestivum (Wheat).